Reading from the N-terminus, the 303-residue chain is MITIFNKLKQSLSKTSNTISTGIDKIFYKKKLDQTTLNELEELLISSDISITVVTHIIEKFKNVKFDKTIDSDTVKEAIAKLIEQQLSKSEIPFTLSENKLNIILICGVNGVGKTTTIGKLSALYSAQGKKVAVAACDTFRAAAINQLSSWVDRANALLITGEVSADPASVAYRAIQESIKQNIDILFIDTAGRLHNNKNLMDELSKIVKVIKKLDENAPTHSILIIDAVTGQNTYNQIEYFNDVTNLTGLIITKLDGSAKAGVLVGAVQKFNLPIYFIGIGEQIEDLKIFNRHDFSRSLVGL.

GTP is bound by residues Gly108–Thr115, Asp190–Arg194, and Thr254–Asp257.

It belongs to the GTP-binding SRP family. FtsY subfamily. In terms of assembly, part of the signal recognition particle protein translocation system, which is composed of SRP and FtsY. SRP is a ribonucleoprotein composed of Ffh and a 4.5S RNA molecule.

The protein localises to the cell inner membrane. It is found in the cytoplasm. The catalysed reaction is GTP + H2O = GDP + phosphate + H(+). Involved in targeting and insertion of nascent membrane proteins into the cytoplasmic membrane. Acts as a receptor for the complex formed by the signal recognition particle (SRP) and the ribosome-nascent chain (RNC). Interaction with SRP-RNC leads to the transfer of the RNC complex to the Sec translocase for insertion into the membrane, the hydrolysis of GTP by both Ffh and FtsY, and the dissociation of the SRP-FtsY complex into the individual components. The polypeptide is Signal recognition particle receptor FtsY (Rickettsia typhi (strain ATCC VR-144 / Wilmington)).